A 375-amino-acid polypeptide reads, in one-letter code: Protein kinase MCK1 (375 aa).

Serine 2 is modified (N-acetylserine). The 293-residue stretch at 35 to 327 (VKEYRKIGRG…PRRILAHQFF (293 aa)) folds into the Protein kinase domain. ATP contacts are provided by residues 41 to 49 (IGRGAFGTV) and lysine 68. Aspartate 164 (proton acceptor) is an active-site residue. At serine 198 the chain carries Phosphoserine. Tyrosine 199 bears the Phosphotyrosine mark. Serine 202 is subject to Phosphoserine.

It belongs to the protein kinase superfamily. Ser/Thr protein kinase family. Phosphorylated at tyrosine and serine.

It carries out the reaction L-seryl-[protein] + ATP = O-phospho-L-seryl-[protein] + ADP + H(+). The catalysed reaction is L-threonyl-[protein] + ATP = O-phospho-L-threonyl-[protein] + ADP + H(+). It catalyses the reaction L-tyrosyl-[protein] + ATP = O-phospho-L-tyrosyl-[protein] + ADP + H(+). May be an autophosphorylating tyrosine kinase, a bifunctional (serine/tyrosine-specific) protein kinase, or a serine kinase that is a substrate for an associated tyrosine kinase. MCK1 is a transcriptional activator of IME1, it stimulates spore maturation, and play a positive regulatory role in both mitotic centromere function and activation of early meiotic gene expression. The chain is Protein kinase MCK1 (MCK1) from Saccharomyces cerevisiae (strain ATCC 204508 / S288c) (Baker's yeast).